The primary structure comprises 374 residues: Peptide chain release factor 2 (374 aa).

Residue Q256 is modified to N5-methylglutamine.

Belongs to the prokaryotic/mitochondrial release factor family. Post-translationally, methylated by PrmC. Methylation increases the termination efficiency of RF2.

The protein resides in the cytoplasm. Its function is as follows. Peptide chain release factor 2 directs the termination of translation in response to the peptide chain termination codons UGA and UAA. The sequence is that of Peptide chain release factor 2 from Mycobacterium leprae (strain Br4923).